Reading from the N-terminus, the 923-residue chain is Transportin-3 (923 aa).

At methionine 1 the chain carries N-acetylmethionine. Serine 74 bears the Phosphoserine mark. Phosphothreonine is present on threonine 896.

As to quaternary structure, interacts with (GTP-bound) Ran. Interacts with (phosphorylated) SFRS1 and SFRS2; leading to their nuclear import. Interacts with NUP62. Interacts with RBM4. Interacts with CPSF6, promoting its nuclear import. In terms of assembly, (Microbial infection) Interacts with the HIV-1 pre-integration complex (PIC), which is composed of viral genome, matrix protein, Vpr and integrase. Interacts with HIV-1 integrase protein; the interaction is direct. In terms of tissue distribution, expressed in skeletal muscle.

The protein resides in the nucleus envelope. It is found in the cytoplasm. Importin, which transports target proteins into the nucleus. Specifically mediates the nuclear import of splicing factor serine/arginine (SR) proteins, such as RBM4, SFRS1 and SFRS2, by recognizing phosphorylated SR domains. Also mediates the nuclear import of serine/arginine (SR) protein CPSF6, independently of CPSF6 phosphorylation. The nuclear import process is regulated by the small GTPase Ran that partitions between cytoplasm and nucleus in the predominantly GDP- and GTP-bound form, respectively. Importin associates with target cargo proteins in the cytoplasm, and the competitive binding of GTP-bound Ran induces the release of cargos in the nucleus. In terms of biological role, (Microbial infection) Involved in immunodeficiency virus (HIV-1) infection by importing the pre-integration complex (PIC) into the nucleus. Required for a nuclear maturation step of HIV-1 prior to integration. The protein is Transportin-3 of Homo sapiens (Human).